We begin with the raw amino-acid sequence, 834 residues long: DNA gyrase subunit A (834 aa).

The region spanning 53-520 is the Topo IIA-type catalytic domain; sequence LPDVRDGLKP…NDTEIDEEDL (468 aa). Y141 functions as the O-(5'-phospho-DNA)-tyrosine intermediate in the catalytic mechanism. Residues 547-553 carry the GyrA-box motif; that stretch reads QGRGGVG.

This sequence belongs to the type II topoisomerase GyrA/ParC subunit family. In terms of assembly, heterotetramer, composed of two GyrA and two GyrB chains. In the heterotetramer, GyrA contains the active site tyrosine that forms a transient covalent intermediate with DNA, while GyrB binds cofactors and catalyzes ATP hydrolysis.

It localises to the cytoplasm. The enzyme catalyses ATP-dependent breakage, passage and rejoining of double-stranded DNA.. Its function is as follows. A type II topoisomerase that negatively supercoils closed circular double-stranded (ds) DNA in an ATP-dependent manner to modulate DNA topology and maintain chromosomes in an underwound state. Negative supercoiling favors strand separation, and DNA replication, transcription, recombination and repair, all of which involve strand separation. Also able to catalyze the interconversion of other topological isomers of dsDNA rings, including catenanes and knotted rings. Type II topoisomerases break and join 2 DNA strands simultaneously in an ATP-dependent manner. In Brachyspira hyodysenteriae (strain ATCC 49526 / WA1), this protein is DNA gyrase subunit A.